The chain runs to 449 residues: G-protein coupled receptor 61 (449 aa).

Residues 1 to 14 show a composition bias toward low complexity; that stretch reads MESSPIPQSSGNSS. The disordered stretch occupies residues 1-29; it reads MESSPIPQSSGNSSTLGRALQTPGPSTAS. Topologically, residues 1 to 44 are extracellular; the sequence is MESSPIPQSSGNSSTLGRALQTPGPSTASGVPELGLRDVASESV. N-linked (GlcNAc...) asparagine glycosylation occurs at Asn-12. Residues 45-67 traverse the membrane as a helical segment; it reads ALFFMLLLDLTAVAGNAAVMAVI. The Cytoplasmic portion of the chain corresponds to 68-75; it reads AKTPALRK. Residues 76 to 98 form a helical membrane-spanning segment; sequence FVFVFHLCLVDLLAALTLMPLAM. Topologically, residues 99 to 112 are extracellular; it reads LSSSALFDHALFGE. A helical membrane pass occupies residues 113–135; that stretch reads VACRLYLFLSVCFVSLAILSVSA. Residues 136-155 are Cytoplasmic-facing; that stretch reads INVERYYYVVHPMRYEVRMT. Residues 156 to 178 form a helical membrane-spanning segment; sequence LGLVASVLVGVWVKALAMASVPV. Over 179–206 the chain is Extracellular; that stretch reads LGRVYWEEGAPSVNPGCSLQWSHSAYCQ. A helical transmembrane segment spans residues 207 to 229; it reads LFVVVFAVLYFLLPLILIFVVYC. Residues 230–287 are Cytoplasmic-facing; the sequence is SMFRVARVAAMQHGPLPTWMETPRQRSESLSSRSTMVTSSGAHQTTPHRTFGGGKAAV. The chain crosses the membrane as a helical span at residues 288–310; the sequence is VLLAVGGQFLLCWLPYFSFHLYV. Over 311–324 the chain is Extracellular; that stretch reads ALSAQPISAGQVEN. A helical transmembrane segment spans residues 325–344; it reads VVTWIGYFCFTSNPFFYGCL. At 345 to 449 the chain is on the cytoplasmic side; it reads NRQIRGELSK…RPAPSPRLES (105 aa).

It belongs to the G-protein coupled receptor 1 family. In terms of assembly, forms heterodimer with MTNR1B. Interacts with ARRB1 and ARRB2 in a spontaneous and agonist-independent manner; leading to the internalization of GPR61 in the endosomal compartment. Predominantly expressed in the brain and testes, with relatively lower expression observed in the eye, adrenal gland and pituitary gland.

It is found in the cell membrane. Its subcellular location is the endosome membrane. Functionally, orphan G-protein coupled receptor. Constitutively activates the G(s)-alpha/cAMP signaling pathway. Shows a reciprocal regulatory interaction with the melatonin receptor MTNR1B most likely through receptor heteromerization. May be involved in the regulation of food intake and body weight. The sequence is that of G-protein coupled receptor 61 (Gpr61) from Mus musculus (Mouse).